The chain runs to 62 residues: Small ribosomal subunit protein bS21 (62 aa).

The span at 40 to 52 (KPSVKRKLKSEAA) shows a compositional bias: basic and acidic residues. The interval 40 to 62 (KPSVKRKLKSEAARKRKNKRRRY) is disordered. Basic residues predominate over residues 53–62 (RKRKNKRRRY).

Belongs to the bacterial ribosomal protein bS21 family.

The chain is Small ribosomal subunit protein bS21 from Limosilactobacillus fermentum (strain NBRC 3956 / LMG 18251) (Lactobacillus fermentum).